We begin with the raw amino-acid sequence, 397 residues long: Vacuolar protein sorting-associated protein 37A (397 aa).

The residue at position 18 (Ser-18) is a Phosphoserine. A VPS37 C-terminal domain is found at 308 to 397 (KSTFEKKMQR…AMHSQFHAPL (90 aa)).

Belongs to the VPS37 family. Component of the ESCRT-I complex (endosomal sorting complex required for transport I) which consists of TSG101, VPS28, a VPS37 protein (VPS37A to -D) and MVB12A or MVB12B in a 1:1:1:1 stoichiometry. Interacts with TSG101, VPS28 and HGS. Component of an ESCRT-I complex (endosomal sorting complex required for transport I) which consists of TSG101, VPS28, VPS37A and UBAP1 in a 1:1:1:1 stoichiometry.

Its subcellular location is the late endosome membrane. It localises to the nucleus. Its function is as follows. Component of the ESCRT-I complex, a regulator of vesicular trafficking process. Required for the sorting of endocytic ubiquitinated cargos into multivesicular bodies. May be involved in cell growth and differentiation. The protein is Vacuolar protein sorting-associated protein 37A (Vps37a) of Mus musculus (Mouse).